We begin with the raw amino-acid sequence, 407 residues long: SERPINE1 mRNA-binding protein 1 (407 aa).

The residue at position 25 (serine 25) is a Phosphoserine. The interval 33–227 (AAENKKKEAG…GSGSHNWGTV (195 aa)) is disordered. The segment covering 51–68 (AKSAAQAAAQTNSNAAGK) has biased composition (low complexity). Lysine 52 bears the N6-acetyllysine; alternate mark. Lysine 52 participates in a covalent cross-link: Glycyl lysine isopeptide (Lys-Gly) (interchain with G-Cter in SUMO1); alternate. At lysine 68 the chain carries N6-acetyllysine. Composition is skewed to basic and acidic residues over residues 70-80 (LRKESQKDRKN), 89-114 (ADKK…RRPD), and 122-162 (KLID…ERPI). Lysine 102 is covalently cross-linked (Glycyl lysine isopeptide (Lys-Gly) (interchain with G-Cter in SUMO2)). N6-acetyllysine is present on residues lysine 122 and lysine 140. The segment covering 164-182 (GRGGLGRGRGGRGRGMGRG) has biased composition (gly residues). Residues arginine 165 and arginine 188 each carry the omega-N-methylarginine modification. Over residues 183 to 199 (DGFDSRGKREFDRHSGS) the composition is skewed to basic and acidic residues. Phosphoserine occurs at positions 197, 199, 203, 205, and 208. N6-acetyllysine; alternate is present on lysine 211. Residue lysine 211 forms a Glycyl lysine isopeptide (Lys-Gly) (interchain with G-Cter in SUMO2); alternate linkage. The residue at position 216 (arginine 216) is an Omega-N-methylarginine. Serine 221 carries the post-translational modification Phosphoserine. Threonine 226 carries the phosphothreonine modification. A Glycyl lysine isopeptide (Lys-Gly) (interchain with G-Cter in SUMO1); alternate cross-link involves residue lysine 228. Residue lysine 228 forms a Glycyl lysine isopeptide (Lys-Gly) (interchain with G-Cter in SUMO2); alternate linkage. Leucine 231, serine 234, and tyrosine 237 each carry phosphoserine. Serine 234 carries the post-translational modification Phosphothreonine. The residue at position 240 (lysine 240) is a Phosphothreonine. The segment covering 242-256 (ISYNCSDLDQSNVTE) has biased composition (polar residues). Disordered stretches follow at residues 242–288 (ISYN…KEMT) and 327–407 (SKSE…PALA). Residues 261–274 (GEEHPVADTENKEN) are compositionally biased toward basic and acidic residues. Residue lysine 280 forms a Glycyl lysine isopeptide (Lys-Gly) (interchain with G-Cter in SUMO2) linkage. A compositionally biased stretch (basic and acidic residues) spans 327-341 (SKSEEAHAEDSVMDH). Lysine 328 is subject to N6-acetyllysine. Serine 329 carries the phosphoserine modification. A compositionally biased stretch (gly residues) spans 362 to 371 (GRPGRGGRGG). An omega-N-methylarginine mark is found at arginine 363, arginine 366, and arginine 369. Residues serine 391 and serine 393 each carry the phosphoserine modification.

The protein belongs to the SERBP1-HABP4 family. In terms of assembly, associates with mature 80S ribosomes. Interacts with EEF2/eEF2; interaction sequesters EEF2/eEF2 at the A-site of the ribosome, thereby blocking the interaction sites of the mRNA-tRNA complex, promoting ribosome stabilization and hibernation. Interacts with SPIN1. Interacts with CHD3 and TDRD3. Interacts with ZDHHC17 (via ANK repeats). Phosphorylation by MTOR inhibits SERBP1 and relieves ribosome hibernation.

It localises to the cytoplasm. The protein resides in the nucleus. It is found in the perinuclear region. Ribosome-binding protein that promotes ribosome hibernation, a process during which ribosomes are stabilized in an inactive state and preserved from proteasomal degradation. Acts via its association with EEF2/eEF2 factor, sequestering EEF2/eEF2 at the A-site of the ribosome and promoting ribosome stabilization and storage in an inactive state. May also play a role in the regulation of mRNA stability: binds to the 3'-most 134 nt of the SERPINE1/PAI1 mRNA, a region which confers cyclic nucleotide regulation of message decay. Seems to play a role in PML-nuclear bodies formation. The polypeptide is SERPINE1 mRNA-binding protein 1 (Mus musculus (Mouse)).